Here is a 132-residue protein sequence, read N- to C-terminus: Small ribosomal subunit protein uS8 (132 aa).

Belongs to the universal ribosomal protein uS8 family. As to quaternary structure, part of the 30S ribosomal subunit. Contacts proteins S5 and S12.

Its function is as follows. One of the primary rRNA binding proteins, it binds directly to 16S rRNA central domain where it helps coordinate assembly of the platform of the 30S subunit. This Arthrobacter sp. (strain FB24) protein is Small ribosomal subunit protein uS8.